The sequence spans 394 residues: GPI mannosyltransferase 2 (394 aa).

Transmembrane regions (helical) follow at residues 2–22 (LWKL…IIYF), 47–67 (YYNV…SVYF), 104–124 (LTSI…LYYL), 132–152 (FGLV…LTGN), 185–205 (SITN…NFTV), 232–252 (IILS…TNIY), 293–313 (IPNF…LGYM), 323–343 (LLPL…FWNI), and 371–391 (YAIG…AAFL).

Belongs to the PIGV family.

The protein resides in the endoplasmic reticulum membrane. It functions in the pathway glycolipid biosynthesis; glycosylphosphatidylinositol-anchor biosynthesis. Its function is as follows. Mannosyltransferase involved in glycosylphosphatidylinositol-anchor biosynthesis. Transfers the second mannose to the glycosylphosphatidylinositol during GPI precursor assembly. This Candida albicans (strain SC5314 / ATCC MYA-2876) (Yeast) protein is GPI mannosyltransferase 2 (GPI18).